The sequence spans 245 residues: METVNNSVQSEKSRRRVLLKLSGEVFGGGKLGVDPDTVRGVAKQIAAAVPDVEVAIVVGGGNFFRGAELSQSGMDRSRADYMGMLGTVMNCLALQDFLEQAGVETRVQSAITMGQVAEAYIPRRAIRHMEKGRVVIFGAGAGLPYFSTDTVAAQRALEVHADVVLMAKSGVDGVYTADPKKDPEAEKLDHLSYDEALRRDIRVMDQTAMTMCKDNNLTMVVFGMEGEGNVTRAIRGEQLGTVVTP.

20–23 (KLSG) provides a ligand contact to ATP. Gly60 contributes to the UMP binding site. The ATP site is built by Gly61 and Arg65. Residues Asp80 and 141-148 (AGLPYFST) each bind UMP. Positions 175 and 178 each coordinate ATP.

This sequence belongs to the UMP kinase family. Homohexamer.

The protein localises to the cytoplasm. The enzyme catalyses UMP + ATP = UDP + ADP. The protein operates within pyrimidine metabolism; CTP biosynthesis via de novo pathway; UDP from UMP (UMPK route): step 1/1. Its activity is regulated as follows. Inhibited by UTP. Functionally, catalyzes the reversible phosphorylation of UMP to UDP. The sequence is that of Uridylate kinase from Arthrobacter sp. (strain FB24).